The primary structure comprises 236 residues: Transcriptional activator protein SolR (236 aa).

One can recognise an HTH luxR-type domain in the interval 169–234; that stretch reads VPESNAVLTT…QAVVKAIATG (66 aa). The H-T-H motif DNA-binding region spans 193-212; sequence AYEIGQILRISERTVNFHVN.

It belongs to the autoinducer-regulated transcriptional regulatory protein family.

This Ralstonia solanacearum (Pseudomonas solanacearum) protein is Transcriptional activator protein SolR (solR).